Consider the following 296-residue polypeptide: MRKIKLIAVVGPTAVGKTALGIELAKTFNGEIISGDSQQVYQKLDIGTAKASKEEQEQAYHHLIDVREVNENYSVYDFVKEAKVAIDTIISKGKIPIIVGGTGLYLQSLFEGYHLGGEVNQETLKAYREKLESLSDEDLFEKLTEQSIVIPQVNRRRAIRALELAKFGNDLQNSESPYDVLLIGLNDDRQVLYDRINRRVDLMIDNGLLDEAKWLYDNYPSVQASRGIGYKELFPYFSKQIPLEEAVDKLKQNTRRFAKRQLTWFRNRMNVEFIMVGEENYQQKIKRKVSDFLSSK.

11–18 lines the ATP pocket; it reads GPTAVGKT. 13–18 lines the substrate pocket; the sequence is TAVGKT. The tract at residues 36-39 is interaction with substrate tRNA; that stretch reads DSQQ.

It belongs to the IPP transferase family. In terms of assembly, monomer. It depends on Mg(2+) as a cofactor.

The enzyme catalyses adenosine(37) in tRNA + dimethylallyl diphosphate = N(6)-dimethylallyladenosine(37) in tRNA + diphosphate. Functionally, catalyzes the transfer of a dimethylallyl group onto the adenine at position 37 in tRNAs that read codons beginning with uridine, leading to the formation of N6-(dimethylallyl)adenosine (i(6)A). The polypeptide is tRNA dimethylallyltransferase (Streptococcus agalactiae serotype III (strain NEM316)).